The following is a 560-amino-acid chain: MSNKVKSDIEIASKAEILPVTTIAEHLGLDADALELYGKYKAKLSYDTIHSLKDKEPGKLVLVTAINPTPAGEGKSTVTVGLGDALSKKDKKTVIALREPSLGPTMGIKGGATGGGYAQVIPMEDINLHFTGDFHAITAANNALSAFIDNHMQQGNDLEIDGRRIVWKRVVDLNDRALRKVVVGLGGPIQGVPREDGFDITVASEIMAIICLASDLKDLKKRLSEIVIGYNYKKEPITVGEMGYEGALTLLLKDALKPNLVQTLEHTPAIVHGGPFANIAHGCNSVSATSTALRLGDYVVTEAGFGADLGAEKFLDIKVPALGKAPDCVVIVATIRALKMHGGALKTELSEENVDALAKGFTNLQKHTESIQTFGIPYVVAINKFITDSDAEVAKLEALCEEHGIPFSLTEVWEKGGDGGLELADKVIAAVESGAADYKRIYDDAWSMEEKLEAIVTKVYGGIGVELSSKAQKQIVEFKKYGWDRYPICMAKTQYSLSDDPTLLGRPTDFVIHIREFIPKLGAGFVVALTGDVMTMPGLPKKPAALNMDVDENGNAQGLF.

An ATP-binding site is contributed by threonine 69 to serine 76.

This sequence belongs to the formate--tetrahydrofolate ligase family.

It carries out the reaction (6S)-5,6,7,8-tetrahydrofolate + formate + ATP = (6R)-10-formyltetrahydrofolate + ADP + phosphate. It functions in the pathway one-carbon metabolism; tetrahydrofolate interconversion. The chain is Formate--tetrahydrofolate ligase from Listeria monocytogenes serovar 1/2a (strain ATCC BAA-679 / EGD-e).